A 666-amino-acid polypeptide reads, in one-letter code: Pantothenate kinase 1 (666 aa).

It belongs to the type II pantothenate kinase family.

The enzyme catalyses (R)-pantothenate + ATP = (R)-4'-phosphopantothenate + ADP + H(+). The protein operates within cofactor biosynthesis; coenzyme A biosynthesis; CoA from (R)-pantothenate: step 1/5. Regulated by feedback inhibition by malonyl-CoA. Functionally, catalyzes the phosphorylation of pantothenate the first step in CoA biosynthesis. May play a role in the physiological regulation of the intracellular CoA concentration. The sequence is that of Pantothenate kinase 1 from Oryza sativa subsp. japonica (Rice).